The primary structure comprises 224 residues: UPF0758 protein Sde_3678 (224 aa).

The region spanning 102–224 (SLTSTTAVKQ…AVSFAERGWI (123 aa)) is the MPN domain. 3 residues coordinate Zn(2+): histidine 173, histidine 175, and aspartate 186. Residues 173–186 (HNHPSGIAEPSEPD) carry the JAMM motif motif.

It belongs to the UPF0758 family.

This is UPF0758 protein Sde_3678 from Saccharophagus degradans (strain 2-40 / ATCC 43961 / DSM 17024).